The primary structure comprises 118 residues: Basic phospholipase A2 PA-15 (118 aa).

Intrachain disulfides connect Cys11-Cys71, Cys27-Cys117, Cys29-Cys45, Cys44-Cys98, Cys51-Cys91, Cys60-Cys84, and Cys78-Cys89. Residues Tyr28, Gly30, and Gly32 each coordinate Ca(2+). His48 is a catalytic residue. Asp49 is a binding site for Ca(2+). The active site involves Asp92.

This sequence belongs to the phospholipase A2 family. Group I subfamily. D49 sub-subfamily. Requires Ca(2+) as cofactor. As to expression, expressed by the venom gland.

It is found in the secreted. It carries out the reaction a 1,2-diacyl-sn-glycero-3-phosphocholine + H2O = a 1-acyl-sn-glycero-3-phosphocholine + a fatty acid + H(+). Functionally, PLA2 catalyzes the calcium-dependent hydrolysis of the 2-acyl groups in 3-sn-phosphoglycerides. This chain is Basic phospholipase A2 PA-15, found in Pseudechis australis (Mulga snake).